Reading from the N-terminus, the 247-residue chain is Translation initiation factor IF-3 (247 aa).

Disordered regions lie at residues 1–20 (MIRE…TNRR) and 188–247 (LVRQ…PTAS). A needed for vegetative and developmental functions, but not for viability region spans residues 182–247 (AQKARELVRQ…AAEAQSPTAS (66 aa)). Residues 207–217 (AGKSAAGASSG) show a composition bias toward low complexity. A compositionally biased stretch (basic and acidic residues) spans 218-232 (AEEKAEETAEEKKEA). The segment covering 233–247 (QAAPAAAEAQSPTAS) has biased composition (low complexity).

It belongs to the IF-3 family. As to quaternary structure, monomer.

It localises to the cytoplasm. In terms of biological role, IF-3 binds to the 30S ribosomal subunit and shifts the equilibrium between 70S ribosomes and their 50S and 30S subunits in favor of the free subunits, thus enhancing the availability of 30S subunits on which protein synthesis initiation begins. The chain is Translation initiation factor IF-3 from Myxococcus xanthus.